We begin with the raw amino-acid sequence, 259 residues long: MILVLDVGNTNIVLGVYDDRELISVWRLSTDSKRTADEYGVQVIDLFLQSKLKPEDITGSIISSVVPTIMYSLEHMIIKYFQVSPIIVGPGVKTGINVKYDNPREVGADRIVNAVAAHEIYNRSLIIIDFGTATTFCAVTSAGDYLGGAICPGIKISSSALFEMAAKLPRVEIIRPQNIIGKNTVSSMQSGIVYGYIGQVDYIVKKMKMEMMDLGEEEPLVIATGGLAKLINEGTKSIDIIDSVLTLTGLRLIYEKNKE.

ATP is bound at residue 6-13; that stretch reads DVGNTNIV. Residues tyrosine 100 and 107 to 110 contribute to the substrate site; that span reads GADR. Catalysis depends on aspartate 109, which acts as the Proton acceptor. A K(+)-binding site is contributed by aspartate 129. Threonine 132 serves as a coordination point for ATP. Threonine 184 contacts substrate.

It belongs to the type III pantothenate kinase family. In terms of assembly, homodimer. Requires NH4(+) as cofactor. K(+) serves as cofactor.

It is found in the cytoplasm. It carries out the reaction (R)-pantothenate + ATP = (R)-4'-phosphopantothenate + ADP + H(+). The protein operates within cofactor biosynthesis; coenzyme A biosynthesis; CoA from (R)-pantothenate: step 1/5. In terms of biological role, catalyzes the phosphorylation of pantothenate (Pan), the first step in CoA biosynthesis. This is Type III pantothenate kinase from Clostridium kluyveri (strain NBRC 12016).